We begin with the raw amino-acid sequence, 149 residues long: MQVILLDKVANLGSLGDQVNVKAGYARNFLVPQGKAVPATKKNIEFFEARRAELEAKLAEVLAAANARAEKINALETVTIASKAGDEGKLFGSIGTRDIADAVTAAGVEVAKSEVRLPNGVLRTTGEHEVSFQVHSEVFAKVIVNVVAE.

Lysine 89 is subject to N6-acetyllysine.

It belongs to the bacterial ribosomal protein bL9 family.

Binds to the 23S rRNA. This Shigella boydii serotype 18 (strain CDC 3083-94 / BS512) protein is Large ribosomal subunit protein bL9.